The sequence spans 133 residues: MYSWYFPKDSPSTGLGHRHDWEHVIVWIDNPEIAEPKILAVTPSAHSGYSAQVPPDADKVEGTSVKVNYESKWPINHALGSTTKGGDYQDLIMWEQLTDAARLALENTDFGKANVPMKDGNFVGKLNKAWPFD.

The Conserved undecapeptide motifI I motif lies at 1–9; sequence MYSWYFPKD. Residues 16–22 carry the Hepta-peptide GHRHDWE motif II motif; it reads GHRHDWE.

Belongs to the Necrosis inducing protein (NPP1) family.

It localises to the secreted. Its function is as follows. Secreted effector that contributes strongly to virulence during infection by P.capsici. Causes large necrotic areas in both host C.annuum and non-host N.benthamiana. In Phytophthora capsici, this protein is NLP effector protein 14.